A 620-amino-acid polypeptide reads, in one-letter code: Ion-translocating oxidoreductase complex subunit C (620 aa).

4Fe-4S ferredoxin-type domains follow at residues 366–397 and 407–436; these read TEMGLSEPEQSCIRCGLCVDACPAGLLPQQLY and KARNHNLFDCIECGACAYVCPSNIPLVQYY. 8 residues coordinate [4Fe-4S] cluster: cysteine 377, cysteine 380, cysteine 383, cysteine 387, cysteine 416, cysteine 419, cysteine 422, and cysteine 426.

Belongs to the 4Fe4S bacterial-type ferredoxin family. RnfC subfamily. The complex is composed of six subunits: RnfA, RnfB, RnfC, RnfD, RnfE and RnfG. Requires [4Fe-4S] cluster as cofactor.

It is found in the cell inner membrane. Part of a membrane-bound complex that couples electron transfer with translocation of ions across the membrane. The protein is Ion-translocating oxidoreductase complex subunit C of Yersinia pestis bv. Antiqua (strain Antiqua).